Reading from the N-terminus, the 276-residue chain is Dermonecrotic toxin LlSicTox-alphaIV3 (276 aa).

His-5 is a catalytic residue. Mg(2+) contacts are provided by Glu-25 and Asp-27. The active-site Nucleophile is His-41. Intrachain disulfides connect Cys-45–Cys-51 and Cys-47–Cys-192. Asp-85 provides a ligand contact to Mg(2+).

It belongs to the arthropod phospholipase D family. Class II subfamily. Requires Mg(2+) as cofactor. Expressed by the venom gland.

It localises to the secreted. It catalyses the reaction an N-(acyl)-sphingosylphosphocholine = an N-(acyl)-sphingosyl-1,3-cyclic phosphate + choline. It carries out the reaction an N-(acyl)-sphingosylphosphoethanolamine = an N-(acyl)-sphingosyl-1,3-cyclic phosphate + ethanolamine. The catalysed reaction is a 1-acyl-sn-glycero-3-phosphocholine = a 1-acyl-sn-glycero-2,3-cyclic phosphate + choline. The enzyme catalyses a 1-acyl-sn-glycero-3-phosphoethanolamine = a 1-acyl-sn-glycero-2,3-cyclic phosphate + ethanolamine. Functionally, dermonecrotic toxins cleave the phosphodiester linkage between the phosphate and headgroup of certain phospholipids (sphingolipid and lysolipid substrates), forming an alcohol (often choline) and a cyclic phosphate. This toxin acts on sphingomyelin (SM). It may also act on ceramide phosphoethanolamine (CPE), lysophosphatidylcholine (LPC) and lysophosphatidylethanolamine (LPE), but not on lysophosphatidylserine (LPS), and lysophosphatidylglycerol (LPG). It acts by transphosphatidylation, releasing exclusively cyclic phosphate products as second products. Induces dermonecrosis, hemolysis, increased vascular permeability, edema, inflammatory response, and platelet aggregation. The chain is Dermonecrotic toxin LlSicTox-alphaIV3 from Loxosceles laeta (South American recluse spider).